The primary structure comprises 1391 residues: ESX-5 secretion system protein EccC5 (1391 aa).

Transmembrane regions (helical) follow at residues W38–F58 and F65–F85. FtsK domains are found at residues G476–Q678, Q858–K1052, and L1161–E1354. Residues G499–S506, G876–T883, and G1178–T1185 contribute to the ATP site.

As to quaternary structure, part of the ESX-5 / type VII secretion system (T7SS), which is composed of cytosolic and membrane components. The ESX-5 membrane complex is composed of EccB5, EccC5, EccD5 and EccE5.

The protein resides in the cell inner membrane. Functionally, part of the ESX-5 specialized secretion system, which is responsible for the secretion of EsxN and a number of PE_PGRS and PPE proteins, including PPE41. The protein is ESX-5 secretion system protein EccC5 of Mycobacterium tuberculosis (strain CDC 1551 / Oshkosh).